A 196-amino-acid polypeptide reads, in one-letter code: DnaA initiator-associating protein DiaA (196 aa).

An SIS domain is found at 34–196; that stretch reads LVQSLLNGNK…DNTLFPHQDD (163 aa).

Belongs to the SIS family. DiaA subfamily. In terms of assembly, homotetramer; dimer of dimers.

Required for the timely initiation of chromosomal replication via direct interactions with the DnaA initiator protein. In Klebsiella pneumoniae (strain 342), this protein is DnaA initiator-associating protein DiaA.